A 281-amino-acid chain; its full sequence is UPF0046 protein C25E10.12 (281 aa).

It belongs to the UPF0046 family.

The protein is UPF0046 protein C25E10.12 of Caenorhabditis elegans.